A 572-amino-acid chain; its full sequence is Proline--tRNA ligase (572 aa).

This sequence belongs to the class-II aminoacyl-tRNA synthetase family. ProS type 1 subfamily. As to quaternary structure, homodimer.

It localises to the cytoplasm. The enzyme catalyses tRNA(Pro) + L-proline + ATP = L-prolyl-tRNA(Pro) + AMP + diphosphate. In terms of biological role, catalyzes the attachment of proline to tRNA(Pro) in a two-step reaction: proline is first activated by ATP to form Pro-AMP and then transferred to the acceptor end of tRNA(Pro). As ProRS can inadvertently accommodate and process non-cognate amino acids such as alanine and cysteine, to avoid such errors it has two additional distinct editing activities against alanine. One activity is designated as 'pretransfer' editing and involves the tRNA(Pro)-independent hydrolysis of activated Ala-AMP. The other activity is designated 'posttransfer' editing and involves deacylation of mischarged Ala-tRNA(Pro). The misacylated Cys-tRNA(Pro) is not edited by ProRS. This is Proline--tRNA ligase from Erwinia tasmaniensis (strain DSM 17950 / CFBP 7177 / CIP 109463 / NCPPB 4357 / Et1/99).